The sequence spans 161 residues: MAEVANNEQQAPQFNIQRVYTKDVSFETPNSPAVFQKEWNPEVKLDLDTRSAKLADDVYEVVLSLTVTAQNAGETAFLCEVQQAGIFSIAGLTEPQLAHSLGAYCPNILFPYAREAVGSLVGRGTFPQLNLAPVNFDALFAQYVQQRQAAAAAPAAEEANA.

It belongs to the SecB family. Homotetramer, a dimer of dimers. One homotetramer interacts with 1 SecA dimer.

It localises to the cytoplasm. One of the proteins required for the normal export of preproteins out of the cell cytoplasm. It is a molecular chaperone that binds to a subset of precursor proteins, maintaining them in a translocation-competent state. It also specifically binds to its receptor SecA. In Shewanella sp. (strain ANA-3), this protein is Protein-export protein SecB.